A 290-amino-acid polypeptide reads, in one-letter code: 33 kDa chaperonin (290 aa).

Intrachain disulfides connect Cys-235/Cys-237 and Cys-268/Cys-271.

It belongs to the HSP33 family. Post-translationally, under oxidizing conditions two disulfide bonds are formed involving the reactive cysteines. Under reducing conditions zinc is bound to the reactive cysteines and the protein is inactive.

The protein localises to the cytoplasm. Redox regulated molecular chaperone. Protects both thermally unfolding and oxidatively damaged proteins from irreversible aggregation. Plays an important role in the bacterial defense system toward oxidative stress. The protein is 33 kDa chaperonin of Streptococcus pyogenes serotype M49.